Consider the following 424-residue polypeptide: Kynureninase (424 aa).

Residues Leu-105, Ser-106, 133 to 136 (FPTD), Asp-218, His-221, and Tyr-243 contribute to the pyridoxal 5'-phosphate site. Lys-244 carries the N6-(pyridoxal phosphate)lysine modification. Residues Trp-274 and Asn-302 each coordinate pyridoxal 5'-phosphate.

This sequence belongs to the kynureninase family. Homodimer. Pyridoxal 5'-phosphate serves as cofactor.

It catalyses the reaction L-kynurenine + H2O = anthranilate + L-alanine + H(+). The enzyme catalyses 3-hydroxy-L-kynurenine + H2O = 3-hydroxyanthranilate + L-alanine + H(+). The protein operates within amino-acid degradation; L-kynurenine degradation; L-alanine and anthranilate from L-kynurenine: step 1/1. Its pathway is cofactor biosynthesis; NAD(+) biosynthesis; quinolinate from L-kynurenine: step 2/3. Functionally, catalyzes the cleavage of L-kynurenine (L-Kyn) and L-3-hydroxykynurenine (L-3OHKyn) into anthranilic acid (AA) and 3-hydroxyanthranilic acid (3-OHAA), respectively. The sequence is that of Kynureninase from Stenotrophomonas maltophilia (strain K279a).